Here is a 443-residue protein sequence, read N- to C-terminus: Na(+)-translocating NADH-quinone reductase subunit A (443 aa).

Belongs to the NqrA family. In terms of assembly, composed of six subunits; NqrA, NqrB, NqrC, NqrD, NqrE and NqrF.

It catalyses the reaction a ubiquinone + n Na(+)(in) + NADH + H(+) = a ubiquinol + n Na(+)(out) + NAD(+). Functionally, NQR complex catalyzes the reduction of ubiquinone-1 to ubiquinol by two successive reactions, coupled with the transport of Na(+) ions from the cytoplasm to the periplasm. NqrA to NqrE are probably involved in the second step, the conversion of ubisemiquinone to ubiquinol. The protein is Na(+)-translocating NADH-quinone reductase subunit A of Mannheimia succiniciproducens (strain KCTC 0769BP / MBEL55E).